Consider the following 979-residue polypeptide: Receptor-type tyrosine-protein phosphatase-like N (979 aa).

The signal sequence occupies residues 1 to 34; sequence MRLPGRPGGPGGSGGLRVLLCLLLLGSRPGGCNA. An RESP18 homology domain region spans residues 35-131; the sequence is ISAHGCLFDR…HPRDRSGLVP (97 aa). Topologically, residues 35-575 are lumenal; the sequence is ISAHGCLFDR…RPAHSTSPMR (541 aa). A disulfide bridge connects residues Cys-53 and Cys-62. The segment covering 113-127 has biased composition (basic and acidic residues); sequence IPRLRPPEPHPRDRS. Disordered stretches follow at residues 113–171, 248–272, 285–332, and 391–466; these read IPRL…GAGS, GSKGMFGAHPGHSYGDPPGPPPAQL, SQVP…EQPD, and EQVQ…STRP. Phosphoserine occurs at positions 308 and 309. The span at 400 to 409 shows a compositional bias: pro residues; it reads EPPPPMPSLP. Positions 449–575 are sufficient for dimerization of proICA512; it reads SPLGQNQPTM…RPAHSTSPMR (127 aa). Residues 451 to 466 show a composition bias toward polar residues; it reads LGQNQPTMAGQPSTRP. N-linked (GlcNAc...) asparagine glycans are attached at residues Asn-506 and Asn-524. A helical membrane pass occupies residues 576-600; it reads SVLLTLVALAGVAGLLVALAVALCV. Positions 601-732 are sufficient for dimerization of proICA512; it reads RQHARQRDKE…PNTCATAQGE (132 aa). Over 601 to 979 the chain is Cytoplasmic; that stretch reads RQHARQRDKE…VNAILKALPQ (379 aa). The segment at 643-680 is disordered; the sequence is NRAEGPPEPSRVSSVSSQFSDAAQASPSSHSSTPSWCE. Low complexity predominate over residues 652–677; that stretch reads SRVSSVSSQFSDAAQASPSSHSSTPS. The region spanning 709-969 is the Tyrosine-protein phosphatase domain; the sequence is LAKEWQALCA…EFALTAVAEE (261 aa). Lys-754 participates in a covalent cross-link: Glycyl lysine isopeptide (Lys-Gly) (interchain with G-Cter in SUMO).

This sequence belongs to the protein-tyrosine phosphatase family. Receptor class 8 subfamily. Homodimer; shown for the unprocessed protein (proICA512) in the endoplasmic reticulum and resolved during protein maturation as ICA512-TMF seems to be predominantly monomeric in secretory granules; however, ICA512-CCF interacts with ICA512-TMF disrupting the ICA512-TMF:SNTB2 complex. The isolated lumenal RESP18 homology domain has been shown to form disulfide-linked homooligomers. Interacts (via cytoplasmic domain) with phosphorylated SNTB2; this protects PTPRN against cleavage by CAPN1 to produce ICA512-CCF. Dephosphorylation of SNTB2 upon insulin stimulation disrupts the interaction and results in PTPRN cleavage. Interacts with SNX19. ICA512-CCF interacts with PIAS4; in the nucleus. Interacts with STAT5B (phosphorylated); down-regulated by ICA512-CCF sumoylation; ICA512-CCF prevents STAT5B dephosphorylation; ICA512-CCF mediates interaction of STAT5B with PIAS4. Interacts (via RESP18 homology domain) with insulin and proinsulin. Interacts with PTPRN2, PTPRA and PTPRE. In terms of processing, N-glycosylated. Post-translationally, O-glycosylated. Subject to proteolytic cleavage at multiple sites. Subject to cleavage on a pair of basic residues. On exocytosis of secretory granules in pancreatic beta-cells ICA512-TMF is transiently inserted in the plasma-membrane and cleaved by mu-type calpain CPN1 to yield ICA512-CCF. In terms of processing, sumoylated at two sites including Lys-754. Sumoylation decreases interaction with STAT5. In terms of tissue distribution, detected in pituitary (at protein level).

Its subcellular location is the membrane. It is found in the cytoplasmic vesicle. The protein resides in the secretory vesicle membrane. The protein localises to the perikaryon. It localises to the cell projection. Its subcellular location is the axon. It is found in the synapse. The protein resides in the cell membrane. The protein localises to the endosome. It localises to the nucleus. In terms of biological role, plays a role in vesicle-mediated secretory processes. Required for normal accumulation of secretory vesicles in hippocampus, pituitary and pancreatic islets. Required for the accumulation of normal levels of insulin-containing vesicles and preventing their degradation. Plays a role in insulin secretion in response to glucose stimuli. Required for normal accumulation of the neurotransmitters norepinephrine, dopamine and serotonin in the brain. In females, but not in males, required for normal accumulation and secretion of pituitary hormones, such as luteinizing hormone (LH) and follicle-stimulating hormone (FSH). Required to maintain normal levels of renin expression and renin release. Seems to lack intrinsic enzyme activity. May regulate catalytic active protein-tyrosine phosphatases such as PTPRA through dimerization. Its function is as follows. ICA512-TMF regulates dynamics and exocytosis of insulin secretory granules (SGs); binding of ICA512-TMF to SNTB2/beta-2-syntrophin is proposed to restrain SGs mobility and exocytosis by tethering them to the actin cytoskeleton depending on UTRN; the function is inhibited by cytoplasmic ICA512-CFF dimerizing with ICA512-TMF and displacing SNTB2. ICA512-CCF translocated to the nucleus promotes expression of insulin and other granule-related genes; the function implicates binding to and regulating activity of STAT5B probably by preventing its dephosphorylation and potentially by inducing its sumoylation by recruiting PIAS4. Enhances pancreatic beta-cell proliferation by converging with signaling by STAT5B and STAT3. ICA512-CCF located in the cytoplasm regulates dynamics and exocytosis of insulin secretory granules (SGs) by dimerizing with ICA512-TMF and displacing SNTB2 thus enhancing SGs mobility and exocytosis. This Bos taurus (Bovine) protein is Receptor-type tyrosine-protein phosphatase-like N (PTPRN).